The chain runs to 365 residues: tRNA/tmRNA (uracil-C(5))-methyltransferase (365 aa).

S-adenosyl-L-methionine contacts are provided by glutamine 189, tyrosine 217, asparagine 222, glutamate 238, and aspartate 298. The Nucleophile role is filled by cysteine 323. Catalysis depends on glutamate 357, which acts as the Proton acceptor.

Belongs to the class I-like SAM-binding methyltransferase superfamily. RNA M5U methyltransferase family. TrmA subfamily.

It catalyses the reaction uridine(54) in tRNA + S-adenosyl-L-methionine = 5-methyluridine(54) in tRNA + S-adenosyl-L-homocysteine + H(+). The enzyme catalyses uridine(341) in tmRNA + S-adenosyl-L-methionine = 5-methyluridine(341) in tmRNA + S-adenosyl-L-homocysteine + H(+). Dual-specificity methyltransferase that catalyzes the formation of 5-methyluridine at position 54 (m5U54) in all tRNAs, and that of position 341 (m5U341) in tmRNA (transfer-mRNA). In Shewanella piezotolerans (strain WP3 / JCM 13877), this protein is tRNA/tmRNA (uracil-C(5))-methyltransferase.